Consider the following 420-residue polypeptide: Protein BDLF2 (420 aa).

Disordered stretches follow at residues 1–21 (MVDEQVAVEHGTVSHTISREE) and 64–129 (AAAV…GGQR). The Intravirion portion of the chain corresponds to 1-184 (MVDEQVAVEH…AETLAEPPRC (184 aa)). Over residues 90-108 (TKTNTQDQNQNQTTRTRTN) the composition is skewed to low complexity. A helical; Signal-anchor for type II membrane protein membrane pass occupies residues 185–205 (FMLSFVFIYYCCYLAFLALLA). Over 206–420 (FGFNPLFLPS…LEEVMYVMVQ (215 aa)) the chain is Virion surface. Residues Asn258, Asn264, Asn300, Asn304, Asn371, and Asn384 are each glycosylated (N-linked (GlcNAc...) asparagine; by host).

This sequence belongs to the herpesviridae BDLF2 family. As to quaternary structure, interacts with BMRF2.

The protein resides in the virion membrane. Rearranges cellular actin to increase intercellular contacts and thereby promote virus cell-to-cell spreading. Induce the outgrowth of long, branched plasma membrane fronds to create intercellular network for virion traffic. The fronds are actin based and RhoA-dependent. In Homo sapiens (Human), this protein is Protein BDLF2.